Consider the following 343-residue polypeptide: Flap endonuclease 1 (343 aa).

Positions 1-98 (MGVPIGELIP…KELEKRREAR (98 aa)) are N-domain. 7 residues coordinate Mg(2+): Asp27, Asp80, Glu152, Glu154, Asp173, Asp175, and Asp236. An I-domain region spans residues 116-258 (EARKYAQRAT…KALEIVKYSK (143 aa)). An interaction with PCNA region spans residues 330-338 (KQSTLESWF).

Belongs to the XPG/RAD2 endonuclease family. FEN1 subfamily. In terms of assembly, interacts with PCNA. PCNA stimulates the nuclease activity without altering cleavage specificity. The cofactor is Mg(2+).

Functionally, structure-specific nuclease with 5'-flap endonuclease and 5'-3' exonuclease activities involved in DNA replication and repair. During DNA replication, cleaves the 5'-overhanging flap structure that is generated by displacement synthesis when DNA polymerase encounters the 5'-end of a downstream Okazaki fragment. Binds the unpaired 3'-DNA end and kinks the DNA to facilitate 5' cleavage specificity. Cleaves one nucleotide into the double-stranded DNA from the junction in flap DNA, leaving a nick for ligation. Also involved in the base excision repair (BER) pathway. Acts as a genome stabilization factor that prevents flaps from equilibrating into structures that lead to duplications and deletions. Also possesses 5'-3' exonuclease activity on nicked or gapped double-stranded DNA. This chain is Flap endonuclease 1, found in Pyrococcus abyssi (strain GE5 / Orsay).